Here is a 385-residue protein sequence, read N- to C-terminus: Uroporphyrinogen decarboxylase (385 aa).

Residues 53 to 57 (RQAGR), Asp-102, Tyr-179, Ser-234, and His-363 each bind substrate.

The protein belongs to the uroporphyrinogen decarboxylase family. Homodimer.

It is found in the cytoplasm. The catalysed reaction is uroporphyrinogen III + 4 H(+) = coproporphyrinogen III + 4 CO2. Its pathway is porphyrin-containing compound metabolism; protoporphyrin-IX biosynthesis; coproporphyrinogen-III from 5-aminolevulinate: step 4/4. Catalyzes the decarboxylation of four acetate groups of uroporphyrinogen-III to yield coproporphyrinogen-III. The protein is Uroporphyrinogen decarboxylase of Tropheryma whipplei (strain TW08/27) (Whipple's bacillus).